Consider the following 436-residue polypeptide: Transcription factor MYB124 (436 aa).

The span at M1 to N11 shows a compositional bias: basic residues. A disordered region spans residues M1–R23. Positions K8–N15 match the Nuclear localization signal 1 motif. 2 HTH myb-type domains span residues K20–L71 and N72–A126. 2 consecutive DNA-binding regions (H-T-H motif) follow at residues W48–L71 and W99–C122. Positions P151–T158 match the Nuclear localization signal 2 motif. The tract at residues S309 to S328 is disordered. Over residues P319–S328 the composition is skewed to polar residues.

As to quaternary structure, interacts with RBR1. In terms of tissue distribution, expressed in all shoot organs with higher levels in leaves, stems, flowers, siliques and floral buds. Also detected in roots tips.

The protein resides in the nucleus. Its function is as follows. Transcription factor that binds to DNA in promoters cis-regulatory element 5'-GGCGCGC-3' of cell cycle genes, including cyclins, cyclin-dependent kinases (CDKs), and components of the pre-replication complex. Binds to DNA in promoters cis-regulatory element 5'-AGCCG-3' of auxin regulated genes (e.g. PIN3 and PIN7). Together with FAMA and MYB88, ensures that stomata contain just two guard cells (GCs) by enforcing a single symmetric precursor cell division before stomatal maturity. Represses the expression of the mitosis-inducing factors CDKB1-1 and CDKA-1, specifically required for the last guard mother cells (GMC) symmetric divisions in the stomatal pathway. Represses CYCA2-3 in newly formed guard cells. Together with MYB88, regulates stomata spacing by restricting divisions late in the stomatal cell lineage thus limiting the number of GMC divisions. In collaboration with CDKB1-1 and CDKB1-2, restrict the G1/S transition and chloroplast and nuclear number during stomatal formation, and normally maintain fate and developmental progression throughout the stomatal cell lineage. Also involved in the shape regulation of pavement cells. Involved in sensing and/or transducing abiotic stress (e.g. drought and salt), probably via the positive regulation of NAC019. Regulates female reproduction being required for entry into megasporogenesis, probably via the regulation of cell cycle genes. Promotes histone H3K27me3 marks and represses stem cell gene expression. Required for lateral roots (LRs) initiation via the regulation of PIN3 expression in an auxin-dependent manner. Involved in responses to gravity stimulation in primary roots by regulating the transcription of PIN3 and PIN7 in gravity-sensing cells, thus modulating auxin asymmetric redistribution. This Arabidopsis thaliana (Mouse-ear cress) protein is Transcription factor MYB124.